The following is a 206-amino-acid chain: Large ribosomal subunit protein bL25 (206 aa).

It belongs to the bacterial ribosomal protein bL25 family. CTC subfamily. In terms of assembly, part of the 50S ribosomal subunit; part of the 5S rRNA/L5/L18/L25 subcomplex. Contacts the 5S rRNA. Binds to the 5S rRNA independently of L5 and L18.

Functionally, this is one of the proteins that binds to the 5S RNA in the ribosome where it forms part of the central protuberance. The chain is Large ribosomal subunit protein bL25 from Ralstonia nicotianae (strain ATCC BAA-1114 / GMI1000) (Ralstonia solanacearum).